A 626-amino-acid chain; its full sequence is Phosphoenolpyruvate carboxykinase (ATP) 2 (626 aa).

Disordered regions lie at residues 1–23 (MASP…APVN) and 64–86 (PNLV…KHQQ). 324-331 (GLSGTGKT) is a binding site for ATP.

Belongs to the phosphoenolpyruvate carboxykinase (ATP) family. Homohexamer.

The protein localises to the cytoplasm. It carries out the reaction oxaloacetate + ATP = phosphoenolpyruvate + ADP + CO2. It functions in the pathway carbohydrate biosynthesis; gluconeogenesis. This is Phosphoenolpyruvate carboxykinase (ATP) 2 (PCK2) from Urochloa panicoides (Panic liverseed grass).